A 165-amino-acid chain; its full sequence is Small ribosomal subunit protein bS16 (165 aa).

The segment at 84–165 is disordered; it reads WTHGNNPEKG…EAPAEEAAEG (82 aa). Positions 89-130 are enriched in basic and acidic residues; the sequence is NPEKGKPGKKAQERLAERAQREEERKQAEADAKAAAEAEKAA. A compositionally biased stretch (low complexity) spans 131 to 157; it reads AAEAAAAAAAAPAVEEAPAEEAPAAEA.

It belongs to the bacterial ribosomal protein bS16 family.

The protein is Small ribosomal subunit protein bS16 of Caulobacter vibrioides (strain ATCC 19089 / CIP 103742 / CB 15) (Caulobacter crescentus).